The primary structure comprises 142 residues: NTF2-related export protein 2 (142 aa).

Residues 17 to 136 (AAEEFVNIYY…WKIASDCFRF (120 aa)) enclose the NTF2 domain.

Associates with NXF1, NXF2, NXF3 and NXF5.

The protein resides in the nucleus. The protein localises to the cytoplasm. In terms of biological role, regulator of protein export for NES-containing proteins. Also plays a role in mRNA nuclear export. This chain is NTF2-related export protein 2 (Nxt2), found in Mus musculus (Mouse).